A 294-amino-acid chain; its full sequence is UDP-3-O-acyl-N-acetylglucosamine deacetylase (294 aa).

Zn(2+) is bound by residues H75, H232, and D236. Catalysis depends on H259, which acts as the Proton donor.

Belongs to the LpxC family. Requires Zn(2+) as cofactor.

The enzyme catalyses a UDP-3-O-[(3R)-3-hydroxyacyl]-N-acetyl-alpha-D-glucosamine + H2O = a UDP-3-O-[(3R)-3-hydroxyacyl]-alpha-D-glucosamine + acetate. It participates in glycolipid biosynthesis; lipid IV(A) biosynthesis; lipid IV(A) from (3R)-3-hydroxytetradecanoyl-[acyl-carrier-protein] and UDP-N-acetyl-alpha-D-glucosamine: step 2/6. Functionally, catalyzes the hydrolysis of UDP-3-O-myristoyl-N-acetylglucosamine to form UDP-3-O-myristoylglucosamine and acetate, the committed step in lipid A biosynthesis. This Campylobacter concisus (strain 13826) protein is UDP-3-O-acyl-N-acetylglucosamine deacetylase.